The sequence spans 340 residues: Ketol-acid reductoisomerase (NADP(+)) (340 aa).

The KARI N-terminal Rossmann domain maps to 1-182 (MRVYYDRDCD…GGGRSGIIET (182 aa)). NADP(+) is bound by residues 24 to 27 (YGSQ), Arg-48, Ser-51, Ser-53, and 83 to 86 (DELQ). Residue His-108 is part of the active site. Position 134 (Gly-134) interacts with NADP(+). One can recognise a KARI C-terminal knotted domain in the interval 183 to 329 (NFREECETDL…ETLRGMMPWI (147 aa)). The Mg(2+) site is built by Asp-191, Glu-195, Glu-227, and Glu-231. Ser-252 lines the substrate pocket.

Belongs to the ketol-acid reductoisomerase family. Requires Mg(2+) as cofactor.

The catalysed reaction is (2R)-2,3-dihydroxy-3-methylbutanoate + NADP(+) = (2S)-2-acetolactate + NADPH + H(+). The enzyme catalyses (2R,3R)-2,3-dihydroxy-3-methylpentanoate + NADP(+) = (S)-2-ethyl-2-hydroxy-3-oxobutanoate + NADPH + H(+). It participates in amino-acid biosynthesis; L-isoleucine biosynthesis; L-isoleucine from 2-oxobutanoate: step 2/4. It functions in the pathway amino-acid biosynthesis; L-valine biosynthesis; L-valine from pyruvate: step 2/4. Involved in the biosynthesis of branched-chain amino acids (BCAA). Catalyzes an alkyl-migration followed by a ketol-acid reduction of (S)-2-acetolactate (S2AL) to yield (R)-2,3-dihydroxy-isovalerate. In the isomerase reaction, S2AL is rearranged via a Mg-dependent methyl migration to produce 3-hydroxy-3-methyl-2-ketobutyrate (HMKB). In the reductase reaction, this 2-ketoacid undergoes a metal-dependent reduction by NADPH to yield (R)-2,3-dihydroxy-isovalerate. The sequence is that of Ketol-acid reductoisomerase (NADP(+)) from Jannaschia sp. (strain CCS1).